A 119-amino-acid polypeptide reads, in one-letter code: Iron-sulfur cluster insertion protein ErpA (119 aa).

C47, C111, and C113 together coordinate iron-sulfur cluster.

Belongs to the HesB/IscA family. Homodimer. It depends on iron-sulfur cluster as a cofactor.

In terms of biological role, required for insertion of 4Fe-4S clusters for at least IspG. The chain is Iron-sulfur cluster insertion protein ErpA from Blochmanniella floridana.